Here is a 122-residue protein sequence, read N- to C-terminus: Large ribosomal subunit protein uL14 (122 aa).

This sequence belongs to the universal ribosomal protein uL14 family. As to quaternary structure, part of the 50S ribosomal subunit. Forms a cluster with proteins L3 and L19. In the 70S ribosome, L14 and L19 interact and together make contacts with the 16S rRNA in bridges B5 and B8.

In terms of biological role, binds to 23S rRNA. Forms part of two intersubunit bridges in the 70S ribosome. The protein is Large ribosomal subunit protein uL14 of Streptomyces griseus subsp. griseus (strain JCM 4626 / CBS 651.72 / NBRC 13350 / KCC S-0626 / ISP 5235).